Here is a 278-residue protein sequence, read N- to C-terminus: Coiled-coil domain-containing protein 106 (278 aa).

Positions 61-99 (AQLHLALERNSWLQKRIEDLEEERDFLRCQLDKFISSAR) form a coiled coil. A compositionally biased stretch (basic and acidic residues) spans 102 to 119 (ADDHCRGKPGPRRAEGDG). The tract at residues 102-174 (ADDHCRGKPG…KPKARERQRV (73 aa)) is disordered. Serine 128 carries the post-translational modification Phosphoserine. Over residues 131-144 (ESAASSLSGASEEG) the composition is skewed to low complexity. Positions 150 to 166 (KRQKQKGGPGRRRFGKP) are enriched in basic residues. A Bipartite nuclear localization signal motif is present at residues 151-164 (RQKQKGGPGRRRFG).

As to quaternary structure, interacts with p53/TP53.

It is found in the nucleus. Functionally, promotes the degradation of p53/TP53 protein and inhibits its transactivity. This chain is Coiled-coil domain-containing protein 106 (CCDC106), found in Bos taurus (Bovine).